The following is a 906-amino-acid chain: Probable RNA-directed DNA polymerase from transposon BS (906 aa).

A Reverse transcriptase domain is found at 482–758 (AILRVQFFPK…SQAKYLGITL (277 aa)).

The cofactor is Mg(2+). Mn(2+) serves as cofactor.

It catalyses the reaction DNA(n) + a 2'-deoxyribonucleoside 5'-triphosphate = DNA(n+1) + diphosphate. The protein is Probable RNA-directed DNA polymerase from transposon BS of Drosophila melanogaster (Fruit fly).